Here is a 231-residue protein sequence, read N- to C-terminus: Ribosomal RNA small subunit methyltransferase nep-1 (231 aa).

S-adenosyl-L-methionine is bound by residues Met-161, Gly-188, Gly-193, and 206–211; that span reads ISNYPL.

The protein belongs to the class IV-like SAM-binding methyltransferase superfamily. RNA methyltransferase NEP1 family. In terms of assembly, homodimer.

The protein localises to the nucleus. It localises to the nucleolus. It catalyses the reaction a pseudouridine in rRNA + S-adenosyl-L-methionine = an N(1)-methylpseudouridine in rRNA + S-adenosyl-L-homocysteine + H(+). Functionally, S-adenosyl-L-methionine-dependent pseudouridine N(1)-methyltransferase that methylates a pseudouridine in 18S rRNA. Involved the biosynthesis of the hypermodified N1-methyl-N3-(3-amino-3-carboxypropyl) pseudouridine (m1acp3-Psi) conserved in eukaryotic 18S rRNA. Also has an essential role in 40S ribosomal subunit biogenesis independent on its methyltransferase activity, facilitating the incorporation of ribosomal protein S19 during the formation of pre-ribosomes. The polypeptide is Ribosomal RNA small subunit methyltransferase nep-1 (Caenorhabditis elegans).